We begin with the raw amino-acid sequence, 382 residues long: Queuine tRNA-ribosyltransferase (382 aa).

The active-site Proton acceptor is aspartate 93. Substrate contacts are provided by residues 93-97 (DSGGF), aspartate 147, glutamine 191, and glycine 218. The RNA binding stretch occupies residues 249–255 (GVGKPED). The active-site Nucleophile is the aspartate 268. Residues 273-277 (TRNAR) form an RNA binding; important for wobble base 34 recognition region. Zn(2+)-binding residues include cysteine 306, cysteine 308, cysteine 311, and histidine 337.

This sequence belongs to the queuine tRNA-ribosyltransferase family. In terms of assembly, homodimer. Within each dimer, one monomer is responsible for RNA recognition and catalysis, while the other monomer binds to the replacement base PreQ1. Requires Zn(2+) as cofactor.

The enzyme catalyses 7-aminomethyl-7-carbaguanine + guanosine(34) in tRNA = 7-aminomethyl-7-carbaguanosine(34) in tRNA + guanine. It participates in tRNA modification; tRNA-queuosine biosynthesis. Catalyzes the base-exchange of a guanine (G) residue with the queuine precursor 7-aminomethyl-7-deazaguanine (PreQ1) at position 34 (anticodon wobble position) in tRNAs with GU(N) anticodons (tRNA-Asp, -Asn, -His and -Tyr). Catalysis occurs through a double-displacement mechanism. The nucleophile active site attacks the C1' of nucleotide 34 to detach the guanine base from the RNA, forming a covalent enzyme-RNA intermediate. The proton acceptor active site deprotonates the incoming PreQ1, allowing a nucleophilic attack on the C1' of the ribose to form the product. After dissociation, two additional enzymatic reactions on the tRNA convert PreQ1 to queuine (Q), resulting in the hypermodified nucleoside queuosine (7-(((4,5-cis-dihydroxy-2-cyclopenten-1-yl)amino)methyl)-7-deazaguanosine). This Actinobacillus pleuropneumoniae serotype 3 (strain JL03) protein is Queuine tRNA-ribosyltransferase.